Reading from the N-terminus, the 111-residue chain is Protein IDA-LIKE 5 (111 aa).

The signal sequence occupies residues 1 to 27 (MGNKRIKAMMILVVMIMMVFSWRICEA). Residues 46-56 (RRPNPRNHHHQ) are compositionally biased toward basic residues. The disordered stretch occupies residues 46 to 65 (RRPNPRNHHHQNQGFNGDDY).

In terms of tissue distribution, expressed mainly in flowers. Lower levels in buds and seedlings. Detected in vascular tissues and in hydathodes.

It localises to the secreted. It is found in the extracellular space. May be involved in floral abscission. This is Protein IDA-LIKE 5 (IDL5) from Arabidopsis thaliana (Mouse-ear cress).